Reading from the N-terminus, the 162-residue chain is MTTNIVLETTMGSLILELYTTHAPKTCNNFTTLVRRGYYDNTIFHRIIPNFMVQGGDPTGTGRGGSSIFGEKFEDEIDPGLKHTGAGILSMANAGPNTNGSQFFVTLAPTPWLDGKHTIFGRVKSGMGTIKRMGLVKTGSEDRPVEEVKIVKARVVEEEEQI.

The PPIase cyclophilin-type domain maps to 1–155 (MTTNIVLETT…EEVKIVKARV (155 aa)).

Belongs to the cyclophilin-type PPIase family. PPIL1 subfamily.

The enzyme catalyses [protein]-peptidylproline (omega=180) = [protein]-peptidylproline (omega=0). Its function is as follows. PPIases accelerate the folding of proteins. It catalyzes the cis-trans isomerization of proline imidic peptide bonds in oligopeptides. In Gibberella zeae (strain ATCC MYA-4620 / CBS 123657 / FGSC 9075 / NRRL 31084 / PH-1) (Wheat head blight fungus), this protein is Peptidyl-prolyl cis-trans isomerase-like 1 (CYP1).